The following is a 279-amino-acid chain: Putative pyruvate, phosphate dikinase regulatory protein (279 aa).

153–160 is a binding site for ADP; sequence GVSRTSKT.

It belongs to the pyruvate, phosphate/water dikinase regulatory protein family. PDRP subfamily.

The enzyme catalyses N(tele)-phospho-L-histidyl/L-threonyl-[pyruvate, phosphate dikinase] + ADP = N(tele)-phospho-L-histidyl/O-phospho-L-threonyl-[pyruvate, phosphate dikinase] + AMP + H(+). It catalyses the reaction N(tele)-phospho-L-histidyl/O-phospho-L-threonyl-[pyruvate, phosphate dikinase] + phosphate + H(+) = N(tele)-phospho-L-histidyl/L-threonyl-[pyruvate, phosphate dikinase] + diphosphate. Bifunctional serine/threonine kinase and phosphorylase involved in the regulation of the pyruvate, phosphate dikinase (PPDK) by catalyzing its phosphorylation/dephosphorylation. The protein is Putative pyruvate, phosphate dikinase regulatory protein of Rhodopseudomonas palustris (strain BisB5).